A 295-amino-acid chain; its full sequence is Glutamyl-Q tRNA(Asp) synthetase (295 aa).

L-glutamate is bound by residues 5–9 and Glu41; that span reads RFAPS. The 'HIGH' region signature appears at 8–18; the sequence is PSPTGLLHIGS. Residues Cys97, Cys99, Tyr117, and Cys121 each contribute to the Zn(2+) site. L-glutamate contacts are provided by Tyr178 and Arg196. Positions 234–238 match the 'KMSKS' region motif; the sequence is KWSKQ. Lys237 provides a ligand contact to ATP.

The protein belongs to the class-I aminoacyl-tRNA synthetase family. GluQ subfamily. The cofactor is Zn(2+).

Functionally, catalyzes the tRNA-independent activation of glutamate in presence of ATP and the subsequent transfer of glutamate onto a tRNA(Asp). Glutamate is transferred on the 2-amino-5-(4,5-dihydroxy-2-cyclopenten-1-yl) moiety of the queuosine in the wobble position of the QUC anticodon. The chain is Glutamyl-Q tRNA(Asp) synthetase from Neisseria meningitidis serogroup C / serotype 2a (strain ATCC 700532 / DSM 15464 / FAM18).